We begin with the raw amino-acid sequence, 176 residues long: Interleukin-1 receptor antagonist protein (176 aa).

The first 25 residues, 1–25 (METCRCPLSYLISFLLFLSHSETAC), serve as a signal peptide directing secretion. C91 and C141 are disulfide-bonded. N109 carries N-linked (GlcNAc...) asparagine glycosylation.

This sequence belongs to the IL-1 family.

Its subcellular location is the secreted. Its function is as follows. Anti-inflammatory antagonist of interleukin-1 family of proinflammatory cytokines such as interleukin-1beta/IL1B and interleukin-1alpha/IL1A. Protects from immune dysregulation and uncontrolled systemic inflammation triggered by IL1 for a range of innate stimulatory agents such as pathogens. The polypeptide is Interleukin-1 receptor antagonist protein (IL1RN) (Canis lupus familiaris (Dog)).